The sequence spans 1464 residues: DNA-directed RNA polymerase subunit beta' (1464 aa).

Residues C66, C68, C96, and C99 each contribute to the Zn(2+) site. Positions 491, 493, and 495 each coordinate Mg(2+). Zn(2+) is bound by residues C838, C912, C919, and C922. Residues N1143–D1200 show a composition bias toward acidic residues. The segment at N1143 to D1229 is disordered. A compositionally biased stretch (low complexity) spans H1204 to N1219. A compositionally biased stretch (acidic residues) spans Y1220–D1229.

It belongs to the RNA polymerase beta' chain family. In terms of assembly, the RNAP catalytic core consists of 2 alpha, 1 beta, 1 beta' and 1 omega subunit. When a sigma factor is associated with the core the holoenzyme is formed, which can initiate transcription. It depends on Mg(2+) as a cofactor. Zn(2+) is required as a cofactor.

It catalyses the reaction RNA(n) + a ribonucleoside 5'-triphosphate = RNA(n+1) + diphosphate. Its function is as follows. DNA-dependent RNA polymerase catalyzes the transcription of DNA into RNA using the four ribonucleoside triphosphates as substrates. This chain is DNA-directed RNA polymerase subunit beta', found in Karelsulcia muelleri (strain GWSS) (Sulcia muelleri).